The primary structure comprises 281 residues: 2-dehydro-3-deoxyphosphooctonate aldolase (281 aa).

This sequence belongs to the KdsA family.

It localises to the cytoplasm. The enzyme catalyses D-arabinose 5-phosphate + phosphoenolpyruvate + H2O = 3-deoxy-alpha-D-manno-2-octulosonate-8-phosphate + phosphate. It functions in the pathway carbohydrate biosynthesis; 3-deoxy-D-manno-octulosonate biosynthesis; 3-deoxy-D-manno-octulosonate from D-ribulose 5-phosphate: step 2/3. Its pathway is bacterial outer membrane biogenesis; lipopolysaccharide biosynthesis. The sequence is that of 2-dehydro-3-deoxyphosphooctonate aldolase from Acidithiobacillus ferrooxidans (strain ATCC 23270 / DSM 14882 / CIP 104768 / NCIMB 8455) (Ferrobacillus ferrooxidans (strain ATCC 23270)).